A 306-amino-acid chain; its full sequence is Probable rRNA-processing protein EBP2 (306 aa).

Met1 carries the N-acetylmethionine modification. Disordered regions lie at residues 1–20 and 77–99; these read MDTP…LVTD and VPEI…VDPE. Thr3 bears the Phosphothreonine mark. Phosphoserine occurs at positions 7, 9, 11, 13, and 16. Lys94 is covalently cross-linked (Glycyl lysine isopeptide (Lys-Gly) (interchain with G-Cter in SUMO2)). A coiled-coil region spans residues 138-169; that stretch reads AEMAKSDLQMQKIRQKLQTKQAAMERSEKAKQ. Glycyl lysine isopeptide (Lys-Gly) (interchain with G-Cter in SUMO2) cross-links involve residues Lys179 and Lys218. Positions 213–306 are disordered; that stretch reads LEGDQKPLAQ…TREKMKNRTH (94 aa). 2 positions are modified to phosphoserine: Ser264 and Ser270. The segment covering 274-306 has biased composition (basic residues); it reads KTAHGRGLKRPGKKGSNKRPGKRTREKMKNRTH.

This sequence belongs to the EBP2 family. In terms of assembly, specifically interacts with EBV EBNA1. The EBNA1-EBP2 interaction is important for the stable segregation of EBV episomes during cell division. Interacts with WDR46. Ubiquitous.

The protein resides in the nucleus. It localises to the nucleolus. Required for the processing of the 27S pre-rRNA. The chain is Probable rRNA-processing protein EBP2 (EBNA1BP2) from Homo sapiens (Human).